The primary structure comprises 119 residues: Ribonuclease P protein component (119 aa).

The protein belongs to the RnpA family. Consists of a catalytic RNA component (M1 or rnpB) and a protein subunit.

It catalyses the reaction Endonucleolytic cleavage of RNA, removing 5'-extranucleotides from tRNA precursor.. RNaseP catalyzes the removal of the 5'-leader sequence from pre-tRNA to produce the mature 5'-terminus. It can also cleave other RNA substrates such as 4.5S RNA. The protein component plays an auxiliary but essential role in vivo by binding to the 5'-leader sequence and broadening the substrate specificity of the ribozyme. The chain is Ribonuclease P protein component from Salmonella arizonae (strain ATCC BAA-731 / CDC346-86 / RSK2980).